Consider the following 366-residue polypeptide: Peptide chain release factor 2 (366 aa).

Position 251 is an N5-methylglutamine (Gln-251).

It belongs to the prokaryotic/mitochondrial release factor family. Methylated by PrmC. Methylation increases the termination efficiency of RF2.

The protein resides in the cytoplasm. Peptide chain release factor 2 directs the termination of translation in response to the peptide chain termination codons UGA and UAA. The chain is Peptide chain release factor 2 (prfB) from Listeria innocua serovar 6a (strain ATCC BAA-680 / CLIP 11262).